A 159-amino-acid polypeptide reads, in one-letter code: Transcriptional repressor NrdR (159 aa).

A zinc finger lies at 3–34 (CPFCRHDDTQVVDSRVSEDGAAIRRRRRCSAC). An ATP-cone domain is found at 49–139 (PAVVKKDGSR…VYRRFEDVSE (91 aa)).

The protein belongs to the NrdR family. Requires Zn(2+) as cofactor.

Negatively regulates transcription of bacterial ribonucleotide reductase nrd genes and operons by binding to NrdR-boxes. The protein is Transcriptional repressor NrdR of Burkholderia thailandensis (strain ATCC 700388 / DSM 13276 / CCUG 48851 / CIP 106301 / E264).